The primary structure comprises 273 residues: Dermonecrotic toxin LhSicTox-alphaIA2biii (273 aa).

The active site involves histidine 5. Positions 25 and 27 each coordinate Mg(2+). Histidine 41 serves as the catalytic Nucleophile. Intrachain disulfides connect cysteine 45–cysteine 51 and cysteine 47–cysteine 190. Residue aspartate 85 participates in Mg(2+) binding.

This sequence belongs to the arthropod phospholipase D family. Class II subfamily. Mg(2+) serves as cofactor. In terms of tissue distribution, expressed by the venom gland.

Its subcellular location is the secreted. The catalysed reaction is an N-(acyl)-sphingosylphosphocholine = an N-(acyl)-sphingosyl-1,3-cyclic phosphate + choline. It carries out the reaction an N-(acyl)-sphingosylphosphoethanolamine = an N-(acyl)-sphingosyl-1,3-cyclic phosphate + ethanolamine. The enzyme catalyses a 1-acyl-sn-glycero-3-phosphocholine = a 1-acyl-sn-glycero-2,3-cyclic phosphate + choline. It catalyses the reaction a 1-acyl-sn-glycero-3-phosphoethanolamine = a 1-acyl-sn-glycero-2,3-cyclic phosphate + ethanolamine. In terms of biological role, dermonecrotic toxins cleave the phosphodiester linkage between the phosphate and headgroup of certain phospholipids (sphingolipid and lysolipid substrates), forming an alcohol (often choline) and a cyclic phosphate. This toxin acts on sphingomyelin (SM). It may also act on ceramide phosphoethanolamine (CPE), lysophosphatidylcholine (LPC) and lysophosphatidylethanolamine (LPE), but not on lysophosphatidylserine (LPS), and lysophosphatidylglycerol (LPG). It acts by transphosphatidylation, releasing exclusively cyclic phosphate products as second products. Induces dermonecrosis, hemolysis, increased vascular permeability, edema, inflammatory response, and platelet aggregation. This is Dermonecrotic toxin LhSicTox-alphaIA2biii from Loxosceles hirsuta (Recluse spider).